The primary structure comprises 691 residues: Probable serine/threonine-protein kinase pXi (691 aa).

One can recognise a Protein kinase domain in the interval 18-263; it reads YEIGSQIGNG…IDQTLKHPWI (246 aa). Residues 24–32 and lysine 47 each bind ATP; that span reads IGNGKFAQV. Residue aspartate 137 is the Proton acceptor of the active site. Disordered stretches follow at residues 314–350, 420–447, 510–536, and 600–620; these read TPIKSNDENNNNNNNNNNNNNNNEILDKKSNENENEN, ENDSSSSETYSSSSPIENGGGGGDKFTS, QHNNNINNNNNNINNGGSTSINNGNGT, and GGSGCSSSSDESTGGSFKKDK. The span at 322–336 shows a compositional bias: low complexity; sequence NNNNNNNNNNNNNNN. Basic and acidic residues predominate over residues 338–350; sequence ILDKKSNENENEN. Low complexity-rich tracts occupy residues 423-433, 512-536, and 600-615; these read SSSSETYSSSS, NNNINNNNNNINNGGSTSINNGNGT, and GGSGCSSSSDESTGGS. The stretch at 642-691 forms a coiled coil; sequence PKETMDKLASVLSNYKQKNQEKSLKVKYEKQKDKYKKLKSQLKKDKSLLK.

The protein belongs to the protein kinase superfamily. CAMK Ser/Thr protein kinase family.

It carries out the reaction L-seryl-[protein] + ATP = O-phospho-L-seryl-[protein] + ADP + H(+). The enzyme catalyses L-threonyl-[protein] + ATP = O-phospho-L-threonyl-[protein] + ADP + H(+). The sequence is that of Probable serine/threonine-protein kinase pXi (pXi) from Dictyostelium discoideum (Social amoeba).